We begin with the raw amino-acid sequence, 84 residues long: Small ribosomal subunit protein uS17 (84 aa).

It belongs to the universal ribosomal protein uS17 family. In terms of assembly, part of the 30S ribosomal subunit.

One of the primary rRNA binding proteins, it binds specifically to the 5'-end of 16S ribosomal RNA. The chain is Small ribosomal subunit protein uS17 from Serratia proteamaculans (strain 568).